Here is a 68-residue protein sequence, read N- to C-terminus: Gene 42 protein (68 aa).

This is Gene 42 protein (42) from Mycobacterium phage D29 (Mycobacteriophage D29).